Reading from the N-terminus, the 577-residue chain is Isocitrate dehydrogenase kinase/phosphatase (577 aa).

ATP contacts are provided by residues 324–330 (APGIRGL) and Lys345. Asp380 is an active-site residue.

The protein belongs to the AceK family.

The protein localises to the cytoplasm. It carries out the reaction L-seryl-[isocitrate dehydrogenase] + ATP = O-phospho-L-seryl-[isocitrate dehydrogenase] + ADP + H(+). In terms of biological role, bifunctional enzyme which can phosphorylate or dephosphorylate isocitrate dehydrogenase (IDH) on a specific serine residue. This is a regulatory mechanism which enables bacteria to bypass the Krebs cycle via the glyoxylate shunt in response to the source of carbon. When bacteria are grown on glucose, IDH is fully active and unphosphorylated, but when grown on acetate or ethanol, the activity of IDH declines drastically concomitant with its phosphorylation. The polypeptide is Isocitrate dehydrogenase kinase/phosphatase (Pseudoalteromonas atlantica (strain T6c / ATCC BAA-1087)).